The primary structure comprises 329 residues: Malate dehydrogenase (329 aa).

12–18 contributes to the NAD(+) binding site; that stretch reads GAAGQIG. Residues arginine 95 and arginine 101 each contribute to the substrate site. NAD(+)-binding positions include asparagine 108, glutamine 115, and 132–134; that span reads VGN. Positions 134 and 165 each coordinate substrate. Histidine 190 acts as the Proton acceptor in catalysis.

It belongs to the LDH/MDH superfamily. MDH type 2 family.

It catalyses the reaction (S)-malate + NAD(+) = oxaloacetate + NADH + H(+). Catalyzes the reversible oxidation of malate to oxaloacetate. The polypeptide is Malate dehydrogenase (Polynucleobacter asymbioticus (strain DSM 18221 / CIP 109841 / QLW-P1DMWA-1) (Polynucleobacter necessarius subsp. asymbioticus)).